Consider the following 64-residue polypeptide: Cold shock protein CapA (64 aa).

In terms of domain architecture, CSD spans 7 to 64 (GTVKWFNDEKGFGFITPQGGGDDLFVHFKAIESDGFKSLKEGQTVSFVAEKGQKGMQA).

It is found in the cytoplasm. Functionally, affects cell viability at low temperatures. The polypeptide is Cold shock protein CapA (capA) (Pseudomonas fragi).